The primary structure comprises 423 residues: Putative competence-damage inducible protein (423 aa).

It belongs to the CinA family.

This Streptococcus pyogenes serotype M3 (strain ATCC BAA-595 / MGAS315) protein is Putative competence-damage inducible protein.